We begin with the raw amino-acid sequence, 1063 residues long: MATMLTSDEAGKLLDFSQKLDINLLDKIVEVVYTAQGEQLRLAQSILTTLKEHPEAWTRVDSILEYSQNQRTKFYALQILEEVIKTRWKVLPRNQCEGIKKYVVSLIIKTSSDPIVMEQNKVYLNKLNMILVHILKREWPRNWETFISDIVGASKTNESLCMNNMVILKNLSEEVFDFSQGQITQTKAKHLKDTMCSEFSQIFTLCSFVLENSMNAALIHVTLETLLRFLNWIPLGYIFETQQIETLIFKFLSVPMFRNVTLKCLSEIAGLTAANYDENFATLFKDTMVQLEQIVGQNMNMNHVFKHGSDTEQELVLNLAMFLCTFLKEHGKLVEDAKYVDYLNQALMYLVMISEVEDVEVFKICLEYWNSLVEDLYNSEFFHPTLESTKRQQVYPRRRFYAPILSKVRFIMISRMAKPEEVLVVENENGEVVREFMKDTNSINLYKNMRETLVFLTHLDSVDTDRIMTLKLLNQVNGSEFSWKNLNTLCWAIGSISGAFCEEDEKRFLVTVIKDLLGLCEQKKGKDNKAIIASNIMYVVGQYPRFLRAHWKFLKTVVNKLFEFMHETHDGVQDMACDTFIKIAIKCRRYFVTIQPNEACTFIDEILTTMSSIICDLQPQQVHTFYEAVGYMISAQVDQVQQDVLIERYMQLPNQVWDDIISRASKNVDFLKNMTAVKQLGSILKTNVAACKALGHAYVIQLGRIYLDMLNVYKITSENIIQAIEVNGVNVNNQPLIKTMHVVKKETLNLISEWVSRSNDNQLVMDNFIPPLLDAILLDYQRCKVPSAREPKVLSAMAIIVHKLRQHITNEVPKIFDAVFECTLDMINKNFEDFPQHRLSFYELLQAVNAHCFKAFLNIPPAQFKLVFDSVVWAFKHTMRNVADMGLNILFKMLQNLDQHPGAAQSFYQTYFTDILMQIFSVVTDTSHTAGLPNHAIILAYMFSLVENRKITVNLGPIPDNMIFIQEYVASLLKSAFTHLSDNQVKVFVTGLFNLDENVQAFKEHLRDFLIQIREATGEDDSDLYLEEREAALAEEQSNKHQMQRNIPGMLNPHELPEDMQDE.

The Importin N-terminal domain maps to 43–109 (AQSILTTLKE…KKYVVSLIIK (67 aa)). Residues 1034–1063 (AEEQSNKHQMQRNIPGMLNPHELPEDMQDE) form a disordered region.

The protein belongs to the exportin family. Interacts with Clbn (via its N-terminus). Associates with the nuclear pore complex via interaction with mbo and Nup214. Interacts with target proteins containing NES sequences such as actin and dl. High expression observed in the developing embryonic brain, hind gut and posterior spiracles shortly before dorsal closure; and in the ventral nerve cord, midgut and somatic musculature shortly after dorsal closure. Expression increases when the tissue is well developed.

The protein localises to the nucleus. It is found in the nucleus membrane. Receptor for the leucine-rich nuclear export signal (NES). Binds cooperatively to the NES on its target protein and to the small GTPase Ran in its active GTP-bound form. Involved in the export of dl, RpS2 and the pre-40S ribosome from the nucleus to the cytoplasm. Plays an important role in nuclear pore assembly by mediating nucleoporin condensation and biogenesis of annulate lamellae. Required for the function or maintenance of certain tissues such as brain and gut. The sequence is that of Exportin-1 from Drosophila melanogaster (Fruit fly).